Here is a 146-residue protein sequence, read N- to C-terminus: Basic phospholipase A2 beta-bungarotoxin A1 chain (146 aa).

A signal peptide spans 1–19; it reads MNPAHLLVLPAVCVSFLGA. The propeptide occupies 20–27; that stretch reads SIIPPQSL. Intrachain disulfides connect Cys54–Cys145, Cys56–Cys72, Cys71–Cys126, Cys78–Cys119, Cys87–Cys112, and Cys105–Cys117. The Ca(2+) site is built by Tyr55, Gly57, and Gly59. The active site involves His75. Asp76 serves as a coordination point for Ca(2+). The active site involves Asp120.

Belongs to the phospholipase A2 family. Group I subfamily. D49 sub-subfamily. In terms of assembly, heterodimer with beta-bungarotoxin B chain; disulfide-linked. The A chain has phospholipase A2 activity and the B chain shows homology with the basic protease inhibitors. It depends on Ca(2+) as a cofactor. In terms of tissue distribution, expressed by the venom gland.

The protein resides in the secreted. The catalysed reaction is a 1,2-diacyl-sn-glycero-3-phosphocholine + H2O = a 1-acyl-sn-glycero-3-phosphocholine + a fatty acid + H(+). Snake venom phospholipase A2 (PLA2) that inhibits neuromuscular transmission by blocking acetylcholine release from the nerve termini. PLA2 catalyzes the calcium-dependent hydrolysis of the 2-acyl groups in 3-sn-phosphoglycerides. This Bungarus flaviceps flaviceps (Red-headed krait) protein is Basic phospholipase A2 beta-bungarotoxin A1 chain.